Consider the following 35-residue polypeptide: Photosystem II reaction center protein T (35 aa).

A helical membrane pass occupies residues 3–23; sequence ALVYTFLLVSTLGIIFFAIFF.

This sequence belongs to the PsbT family. As to quaternary structure, PSII is composed of 1 copy each of membrane proteins PsbA, PsbB, PsbC, PsbD, PsbE, PsbF, PsbH, PsbI, PsbJ, PsbK, PsbL, PsbM, PsbT, PsbY, PsbZ, Psb30/Ycf12, at least 3 peripheral proteins of the oxygen-evolving complex and a large number of cofactors. It forms dimeric complexes.

The protein resides in the plastid. Its subcellular location is the chloroplast thylakoid membrane. Found at the monomer-monomer interface of the photosystem II (PS II) dimer, plays a role in assembly and dimerization of PSII. PSII is a light-driven water plastoquinone oxidoreductase, using light energy to abstract electrons from H(2)O, generating a proton gradient subsequently used for ATP formation. This is Photosystem II reaction center protein T from Suaeda aralocaspica (Seablite).